A 497-amino-acid chain; its full sequence is Thiamine transporter 1 (497 aa).

Position 1 is an N-acetylmethionine (Met1). At 1–28 the chain is on the cytoplasmic side; it reads MDVPGPVSRRAAAAAATVLLRTARVRRE. The helical transmembrane segment at 29–46 threads the bilayer; that stretch reads CWFLPTALLCAYGFFASL. Topologically, residues 47–72 are extracellular; sequence RPSEPFLTPYLLGPDKNLTEREVFNE. Asn63 is a glycosylation site (N-linked (GlcNAc...) asparagine). A helical transmembrane segment spans residues 73 to 91; it reads IYPVWTYSYLVLLFPVFLA. The Cytoplasmic portion of the chain corresponds to 92-99; it reads TDYLRYKP. The helical transmembrane segment at 100-118 threads the bilayer; the sequence is VVLLQGLSLIVTWFMLLYA. Residues 119–128 lie on the Extracellular side of the membrane; sequence QGLLAIQFLE. A helical transmembrane segment spans residues 129-149; it reads FFYGIATATEIAYYSYIYSVV. Residues 150–165 are Cytoplasmic-facing; it reads DLGMYQKVTSYCRSAT. The chain crosses the membrane as a helical span at residues 166–185; that stretch reads LVGFTVGSVLGQILVSVAGW. Over 186–191 the chain is Extracellular; sequence SLFSLN. Residues 192–208 traverse the membrane as a helical segment; sequence VISLTCVSVAFAVAWFL. At 209 to 285 the chain is on the cytoplasmic side; the sequence is PMPQKSLFFH…LLVLKVLWND (77 aa). The residue at position 222 (Ser222) is a Phosphoserine. The chain crosses the membrane as a helical span at residues 286–310; that stretch reads FLMCYSSRPLLCWSVWWALSTCGYF. Over 311–337 the chain is Extracellular; sequence QVVNYTQGLWEKVMPSRYAAIYNGGVE. Asn314 is a glycosylation site (N-linked (GlcNAc...) asparagine). Residues 338–354 traverse the membrane as a helical segment; it reads AVSTLLGAVAVFAVGYI. Over 355–363 the chain is Cytoplasmic; that stretch reads KISWSTWGE. A helical membrane pass occupies residues 364-380; the sequence is MTLSLFSLLIAAAVYIM. The Extracellular segment spans residues 381-386; that stretch reads DTVGNI. Residues 387–409 traverse the membrane as a helical segment; that stretch reads WVCYASYVVFRIIYMLLITIATF. The Cytoplasmic portion of the chain corresponds to 410–419; it reads QIAANLSMER. Residues 420 to 443 form a helical membrane-spanning segment; that stretch reads YALVFGVNTFIALALQTLLTLIVV. The Extracellular portion of the chain corresponds to 444–455; the sequence is DASGLGLEITTQ. A helical transmembrane segment spans residues 456–479; sequence FLIYASYFALIAVVFLASGAVSVM. Over 480 to 497 the chain is Cytoplasmic; the sequence is KKCRKLEDPQSSSQVTTS.

Belongs to the reduced folate carrier (RFC) transporter (TC 2.A.48) family. As to quaternary structure, interacts with TSPAN1; this interaction increases the stability of SLC19A2. Interacts with TMEM63B. As to expression, ubiquitous; most abundant in skeletal and cardiac muscle. Medium expression in placenta, heart, liver and kidney, low in lung.

The protein resides in the cell membrane. The catalysed reaction is thiamine(out) + H(+)(in) = thiamine(in) + H(+)(out). It catalyses the reaction pyridoxine(out) + n H(+)(out) = pyridoxine(in) + n H(+)(in). Pyridoxine transport is inhibited by carbonyl cyanide p-trifluoromethoxyphenylhydrazone (FCCP) and carbonyl cyanide m-chlorophenylhydrazone (CCCP). In terms of biological role, high-affinity transporter for the intake of thiamine. Mediates H(+)-dependent pyridoxine transport. The sequence is that of Thiamine transporter 1 (SLC19A2) from Homo sapiens (Human).